The primary structure comprises 1072 residues: Translation initiation factor IF-2 (1072 aa).

2 disordered regions span residues 55–369 (ILDK…TGTA) and 426–452 (ELVD…VSKQ). Composition is skewed to low complexity over residues 91 to 100 (AEASQAAEPA), 108 to 118 (EPATFAAEEPV), 126 to 179 (APRA…AEVA), and 186 to 212 (EAPQ…PSVQ). The segment covering 218-230 (PQPPPRSPVPPAV) has biased composition (pro residues). The segment covering 231–245 (RTPSSTSSSATVVSR) has biased composition (low complexity). The span at 253–307 (QRGGPGGGRPGGPGGPGGRPGGPGGPGGRPGGPGGPGGRPGGPGGPGGRPGGPGG) shows a compositional bias: gly residues. Positions 426–436 (ELVDVSKNKER) are enriched in basic and acidic residues. A tr-type G domain is found at 570 to 737 (PRPPVVAIMG…NLALQAEVLE (168 aa)). The G1 stretch occupies residues 579 to 586 (GHVDHGKT). A GTP-binding site is contributed by 579–586 (GHVDHGKT). Positions 604 to 608 (GITQH) are G2. Positions 625–628 (DTPG) are G3. GTP is bound by residues 625–629 (DTPGH) and 679–682 (NKMD). The G4 stretch occupies residues 679-682 (NKMD). Residues 715–717 (SAK) form a G5 region.

It belongs to the TRAFAC class translation factor GTPase superfamily. Classic translation factor GTPase family. IF-2 subfamily.

It localises to the cytoplasm. One of the essential components for the initiation of protein synthesis. Protects formylmethionyl-tRNA from spontaneous hydrolysis and promotes its binding to the 30S ribosomal subunits. Also involved in the hydrolysis of GTP during the formation of the 70S ribosomal complex. This chain is Translation initiation factor IF-2, found in Myxococcus xanthus (strain DK1622).